Consider the following 238-residue polypeptide: Uridylate kinase (238 aa).

Position 12–15 (12–15 (KLSG)) interacts with ATP. Residue Gly-54 participates in UMP binding. The ATP site is built by Gly-55 and Arg-59. UMP is bound by residues Asp-74 and 135–142 (TGNPFFTT). ATP is bound by residues Thr-162, Tyr-168, and Asp-171.

The protein belongs to the UMP kinase family. In terms of assembly, homohexamer.

The protein resides in the cytoplasm. It catalyses the reaction UMP + ATP = UDP + ADP. The protein operates within pyrimidine metabolism; CTP biosynthesis via de novo pathway; UDP from UMP (UMPK route): step 1/1. Inhibited by UTP. Its function is as follows. Catalyzes the reversible phosphorylation of UMP to UDP. This Azoarcus sp. (strain BH72) protein is Uridylate kinase.